The following is a 556-amino-acid chain: MSTQVSASSLAQIPQPKNRPVANFHPNIWGDQFITYTPEDKVTRACKEEQIEDLKKEVKRKLTAAAVANPSQLLNFIDAVQRLGVAYHFEQEIEEALQHICNSFHDCNDMDGDLYNIALGFRLLRQQGYTISCDIFNKFTDERGRFKEALISDVRGMLGLYEAAHLRVHGEDILAKALAFTTTHLKAMVESLGYHLAEQVAHALNRPIRKGLERLEARWYISVYQDEAFHDKTLLELAKLDFNLVQSLHKEELSNLARWWKELDFATKLPFARDRLVEGYFWMHGVYFEPQYLRGRRILTKVIAMTSILDDIHDAYGTPEELKLFIEAIERWDINSINQLPEYMKLCYVALLDVYKEIEEEMEKEGNQYRVHYAKEVMKNQVRAYFAEAKWLHEEHVPAFEEYMRVALASSGYCLLATTSFVGMGEIATKEAFDWVTSDPKIMSSSNFITRLMDDIKSHKFEQKRGHVTSAVECYMKQYGVSEEQVYSEFQKQIENAWLDINQECLKPTAVSMPLLARLLNFTRTMDVIYKEQDSYTHVGKVMRDNIASVFINAVI.

Polar residues predominate over residues 1–12; sequence MSTQVSASSLAQ. Residues 1–24 are disordered; it reads MSTQVSASSLAQIPQPKNRPVANF. Mg(2+) is bound by residues Asp-310, Asp-314, and Glu-462. The short motif at 310-314 is the DDXXD motif element; sequence DDIHD.

The protein belongs to the terpene synthase family. Tpsa subfamily. It depends on Mg(2+) as a cofactor. As to expression, expressed in flowers and anthers. Detected inside the pollen grains, but not in stems, leaves, tendrils, roots, seeds, pistils or caps.

The protein resides in the cytoplasm. The enzyme catalyses (2E,6E)-farnesyl diphosphate = (+)-valencene + diphosphate. It catalyses the reaction (2E,6E)-farnesyl diphosphate = (-)-7-epi-alpha-selinene + diphosphate. Its pathway is secondary metabolite biosynthesis; terpenoid biosynthesis. Functionally, involved in the biosynthesis of valencene, a major volatile emitted from flowers of grapevine. Can use farnesyl diphosphate as substrate, but not geranyl diphosphate or geranylgeranyl diphosphate. Produces mainly (+)-valencene and (-)-7-epi-alpha-selinene along with five minor products. In Vitis vinifera (Grape), this protein is Valencene synthase (ValCS).